The chain runs to 1702 residues: DNA polymerase (1702 aa).

2 consecutive DOD-type homing endonuclease domains span residues Leu776 to Ile909 and Leu1229 to Ile1368.

This sequence belongs to the DNA polymerase type-B family. In terms of processing, this protein undergoes a protein self splicing that involves a post-translational excision of the two intervening regions (inteins) followed by peptide ligation.

It catalyses the reaction DNA(n) + a 2'-deoxyribonucleoside 5'-triphosphate = DNA(n+1) + diphosphate. In terms of biological role, in addition to polymerase activity, this DNA polymerase exhibits 3' to 5' exonuclease activity. Functionally, intein encoded endonucleases are thought to mediate intein mobility by site-specific recombination initiated by endonuclease cleavage at the 'homing site' in gene that lack the intein. The sequence is that of DNA polymerase (pol) from Thermococcus litoralis.